The chain runs to 308 residues: Protein translocase subunit SecF (308 aa).

The next 6 helical transmembrane spans lie at 28–48 (SIIL…NFGI), 140–160 (IEAG…YIWV), 164–184 (WYFG…ALGF), 194–214 (LSTI…SVVI), 246–266 (ILTV…GGEA), and 272–292 (VLVF…SAPI).

It belongs to the SecD/SecF family. SecF subfamily. In terms of assembly, forms a complex with SecD. Part of the essential Sec protein translocation apparatus which comprises SecA, SecYEG and auxiliary proteins SecDF-YajC and YidC.

It localises to the cell inner membrane. Part of the Sec protein translocase complex. Interacts with the SecYEG preprotein conducting channel. SecDF uses the proton motive force (PMF) to complete protein translocation after the ATP-dependent function of SecA. This chain is Protein translocase subunit SecF, found in Rickettsia felis (strain ATCC VR-1525 / URRWXCal2) (Rickettsia azadi).